A 545-amino-acid polypeptide reads, in one-letter code: Monocarboxylate transporter 8 (545 aa).

Residues 1–98 (MALPSPASEE…VETRGTARGF (98 aa)) form a disordered region. Position 2 is an N-acetylalanine (A2). The Cytoplasmic segment spans residues 2-102 (ALPSPASEEA…GTARGFQPPE (101 aa)). Tandem repeats lie at residues 29–50 (PVPE…PVPV) and 51–72 (PPPE…PLPV). The interval 29 to 72 (PVPEPEPEPEPEPEPEPEPVPVPPPEPQPEPEPQPLPDPAPLPV) is 2 X 22 AA approximate tandem repeats. A compositionally biased stretch (acidic residues) spans 33–45 (PEPEPEPEPEPEP). Residues 46–70 (EPVPVPPPEPQPEPEPQPLPDPAPL) are compositionally biased toward pro residues. Residues 103-123 (GGFGWIVVFAATWCNGSIFGI) traverse the membrane as a helical segment. At 124 to 149 (HNSVGILYSMLLEEEKEKNRQVEFQA) the chain is on the extracellular side. Residues 150 to 170 (AWVGALAMGMIFFCSPIVSIF) traverse the membrane as a helical segment. The Cytoplasmic segment spans residues 171–181 (TDRLGCRITAT). A helical transmembrane segment spans residues 182 to 202 (TGAAVAFIGLHTSSFTSSLSL). The Extracellular segment spans residues 203–204 (RY). The chain crosses the membrane as a helical span at residues 205–225 (FTYGILFGCGCSFAFQPSLVI). At 226–235 (LGHYFQRRLG) the chain is on the cytoplasmic side. A helical membrane pass occupies residues 236 to 256 (LANGVVSAGSSIFSMSFPFLI). The Extracellular portion of the chain corresponds to 257–264 (KMLGDRIK). A helical membrane pass occupies residues 265-285 (LAQTFQVLSTFMFVLTLLSLT). Residues 286-328 (YRPLLPSSQDTPSKRGAHTLRQRFLVQFRKYFNMRVFRQRTYR) lie on the Cytoplasmic side of the membrane. The helical transmembrane segment at 329-349 (IWAFGIAAAALGYFVPYVHLM) threads the bilayer. At 350 to 362 (KYVEDKFKEIKET) the chain is on the extracellular side. Residues 363 to 383 (WVLLVCIGATSGLGRLVSGHI) form a helical membrane-spanning segment. Topologically, residues 384–392 (SDSIPGLKK) are cytoplasmic. The helical transmembrane segment at 393–413 (IYLQVLSFLLLGLMSMMIPLC) threads the bilayer. The Extracellular segment spans residues 414–415 (RD). A helical transmembrane segment spans residues 416-436 (FGGLIVVCLFLGLCDGFFITI). Residues 437–453 (MAPIAFELVGPMQASQA) lie on the Cytoplasmic side of the membrane. A helical membrane pass occupies residues 454 to 474 (IGYLLGMMALPMIAGPPIAGL). The Extracellular portion of the chain corresponds to 475 to 483 (LRNCFGNYH). The chain crosses the membrane as a helical span at residues 484 to 504 (VAFYFAGVPPIIGAVILFFVP). The Cytoplasmic segment spans residues 505 to 545 (LMHQRMFKKEQRESSKDKMLSHDPDPNGELLPGSPTPEEPI). Positions 514-529 (EQRESSKDKMLSHDPD) are enriched in basic and acidic residues. Positions 514 to 545 (EQRESSKDKMLSHDPDPNGELLPGSPTPEEPI) are disordered. T540 bears the Phosphothreonine mark.

It belongs to the major facilitator superfamily. Monocarboxylate porter (TC 2.A.1.13) family. In terms of assembly, monomer. Homodimer. Homooligomer. Expressed at highest levels in liver, lower levels in brain, kidney and heart (at protein level). Expressed in microvessels of the blood-brain barrier (BBB) (at protein level).

The protein localises to the cell membrane. It localises to the apical cell membrane. The catalysed reaction is 3,3',5-triiodo-L-thyronine(out) = 3,3',5-triiodo-L-thyronine(in). It catalyses the reaction 3,3',5'-triiodo-L-thyronine(out) = 3,3',5'-triiodo-L-thyronine(in). It carries out the reaction L-thyroxine(out) = L-thyroxine(in). The enzyme catalyses 3,3'-diiodo-L-thyronine(out) = 3,3'-diiodo-L-thyronine(in). Specific thyroid hormone transmembrane transporter, that mediates both uptake and efflux of thyroid hormone across the cell membrane independently of pH or a Na(+) gradient. Major substrates are the iodothyronines T3 and T4 and to a lesser extent rT3 and 3,3-diiodothyronine (3,3'-T2). Acts as an important mediator of thyroid hormone transport, especially T3, through the blood-brain barrier. The chain is Monocarboxylate transporter 8 (SLC16A2) from Rattus norvegicus (Rat).